The chain runs to 168 residues: uncharacterized protein (168 aa).

3 disordered regions span residues 37 to 74, 81 to 100, and 117 to 168; these read GGSK…SQFT, QYNY…PNYY, and MQPF…EETN. 2 stretches are compositionally biased toward polar residues: residues 52 to 74 and 82 to 95; these read HSGQ…SQFT and YNYN…TRSV. Residues 120 to 129 are compositionally biased toward low complexity; the sequence is FNNQSFNNQS. Over residues 130 to 158 the composition is skewed to polar residues; the sequence is RTHQSKTYQHNQQKRSFNGPRNNGPQNNV.

This is an uncharacterized protein from Acanthamoeba polyphaga (Amoeba).